The following is a 253-amino-acid chain: 3-deoxy-manno-octulosonate cytidylyltransferase (253 aa).

The protein belongs to the KdsB family.

Its subcellular location is the cytoplasm. The catalysed reaction is 3-deoxy-alpha-D-manno-oct-2-ulosonate + CTP = CMP-3-deoxy-beta-D-manno-octulosonate + diphosphate. The protein operates within nucleotide-sugar biosynthesis; CMP-3-deoxy-D-manno-octulosonate biosynthesis; CMP-3-deoxy-D-manno-octulosonate from 3-deoxy-D-manno-octulosonate and CTP: step 1/1. Its pathway is bacterial outer membrane biogenesis; lipopolysaccharide biosynthesis. Functionally, activates KDO (a required 8-carbon sugar) for incorporation into bacterial lipopolysaccharide in Gram-negative bacteria. In Neisseria meningitidis serogroup C / serotype 2a (strain ATCC 700532 / DSM 15464 / FAM18), this protein is 3-deoxy-manno-octulosonate cytidylyltransferase.